The chain runs to 231 residues: NADH-ubiquinone oxidoreductase chain 4 (231 aa).

6 helical membrane passes run 1–21, 34–54, 63–85, 89–111, 128–148, and 169–189; these read PIAG…YGII, MFLP…LTCL, IAYS…TPWG, AMAL…NTTY, ILPM…AIPP, and TIIL…HMLL.

This sequence belongs to the complex I subunit 4 family.

Its subcellular location is the mitochondrion membrane. The enzyme catalyses a ubiquinone + NADH + 5 H(+)(in) = a ubiquinol + NAD(+) + 4 H(+)(out). Functionally, core subunit of the mitochondrial membrane respiratory chain NADH dehydrogenase (Complex I) that is believed to belong to the minimal assembly required for catalysis. Complex I functions in the transfer of electrons from NADH to the respiratory chain. The immediate electron acceptor for the enzyme is believed to be ubiquinone. The protein is NADH-ubiquinone oxidoreductase chain 4 (MT-ND4) of Bothrops bilineatus (Green jararaca).